Reading from the N-terminus, the 1164-residue chain is IgA FC receptor (1164 aa).

The N-terminal stretch at 1–37 (MFKSNYERKMRYSIRKFSVGVASVAVASLFMGSVAHA) is a signal peptide. Disordered stretches follow at residues 54–75 (KPYPSMAQTDQGNNSSSSELET) and 167–220 (HEEV…EDKD). Residues 59 to 73 (MAQTDQGNNSSSSEL) are compositionally biased toward polar residues. Basic and acidic residues-rich tracts occupy residues 167-176 (HEEVEKDKKA) and 183-220 (KQSDTKVDLSNIDKELNHQKSQVEKMAEQKGITNEDKD). IgA-binding stretches follow at residues 199–438 (NHQK…KIEL) and 439–826 (TVSP…ETNT). Residues 434–534 (QKIELTVSPE…VEKTFTITVQ (101 aa)) enclose the Ig-like domain. Residues 536–564 (KEEKQVPKTPEQKDSKTEEKVPQEPKSND) are compositionally biased toward basic and acidic residues. Disordered regions lie at residues 536 to 567 (KEEKQVPKTPEQKDSKTEEKVPQEPKSNDKNQ) and 823 to 947 (ETNT…PDGL). Residues 911–920 (PKIPEPPKTP) show a composition bias toward pro residues. The short motif at 1132–1136 (LPYTG) is the LPXTG sorting signal element. T1135 is modified (pentaglycyl murein peptidoglycan amidated threonine). Residues 1136–1164 (GVASNLVLEIMGLLGLIGTSFIAMKRRKS) constitute a propeptide, removed by sortase.

It is found in the secreted. It localises to the cell wall. This chain is IgA FC receptor (bag), found in Streptococcus agalactiae.